A 93-amino-acid polypeptide reads, in one-letter code: U12-lycotoxin-Ls1a (93 aa).

A signal peptide spans 1–18; it reads MKFAVILLFSLVVLAVAS. A propeptide spanning residues 19–38 is cleaved from the precursor; it reads ESVEEVRREIDIEDLPEQQR.

It belongs to the neurotoxin 31 family. In terms of processing, contains 5 disulfide bonds. In terms of tissue distribution, expressed by the venom gland.

The protein localises to the secreted. The polypeptide is U12-lycotoxin-Ls1a (Lycosa singoriensis (Wolf spider)).